The primary structure comprises 229 residues: Urease accessory protein UreF (229 aa).

Belongs to the UreF family. As to quaternary structure, ureD, UreF and UreG form a complex that acts as a GTP-hydrolysis-dependent molecular chaperone, activating the urease apoprotein by helping to assemble the nickel containing metallocenter of UreC. The UreE protein probably delivers the nickel.

Its subcellular location is the cytoplasm. Its function is as follows. Required for maturation of urease via the functional incorporation of the urease nickel metallocenter. This Staphylococcus aureus (strain JH1) protein is Urease accessory protein UreF.